The chain runs to 612 residues: MNKFCLLPFHGKRIGVANIPFTILFKKGPCFLHSHITAVYYSTKGKNDSHEQSRVSKKSTFTPLETPWYLRIVDNEKELMEGKKNNHHTMNKELEIPKTSPNSLRKIADLLTGKLGLDDFLVFDLRKKSPNSVSAVNKLGDFMVICTARSTKHCHKSFLELNKFLKHEFCSSAYVEGNFNERQESRRKRRLARKSNLSKLLGRSSECSAKDLNSEAWYMIDCRVDGIFVNILTQRRRNELNLEELYAPENEKSKFQNIDSGNVPTISGVNEISSNNNILLGLRRLAQQRRRYSTINPNGLSNLRYFLQKEDFKGANKIIQSSSGTETHNIRTLEHVKNTLKDLVGQERKVDVVQWKSLFDEHSTFLTINQPAAYWPLRLEYAILLNKADPQFYSDRVFLKDYLLLKKSLGQELIREDLIALLEMVLKTQHSSHSYFNLVKQNRVIIRALNLFKGLQTEDDGSVVYDEEVISLLLNSMVADERVKLRSLYETIDHIFQTFGDKLTSGMIVSILQNLAKIKDWNKLLQVWEAITPTEGEGQDKRPWNEFINVINQSGDSHVISKIVNNGHLLWIRRLNVNVTPELCNSIKALLKTAGMENSTLEEFLVRGTNNQ.

The transit peptide at 1–14 (MNKFCLLPFHGKRI) directs the protein to the mitochondrion.

It belongs to the ATP25 family.

Its subcellular location is the mitochondrion inner membrane. In terms of biological role, mRNA stabilization factor specific for the 0.95 kb OLI1 mRNA. Also involved in OLI1 ring formation. This is ATPase synthesis protein 25, mitochondrial (ATP25) from Saccharomyces cerevisiae (strain AWRI1631) (Baker's yeast).